Here is a 285-residue protein sequence, read N- to C-terminus: Hydrolase in pqqF 5'region (285 aa).

In terms of domain architecture, CN hydrolase spans 22–258; that stretch reads MRVALYQCPP…EALIIGTLDR (237 aa). Glutamate 60 (proton acceptor) is an active-site residue. Residue lysine 131 is the Proton donor of the active site. Residue cysteine 165 is the Nucleophile of the active site.

Belongs to the carbon-nitrogen hydrolase superfamily. NIT1/NIT2 family.

The polypeptide is Hydrolase in pqqF 5'region (Pseudomonas protegens (strain DSM 19095 / LMG 27888 / CFBP 6595 / CHA0)).